We begin with the raw amino-acid sequence, 237 residues long: Ras modification protein ERF4 (237 aa).

Belongs to the ERF4 family. Interacts with ERF2.

It localises to the endoplasmic reticulum membrane. Its function is as follows. The ERF2-SHR5 complex is a palmitoyltransferase specific for Ras proteins. Palmitoylates RAS2, which is required for its proper plasma membrane localization. This Saccharomyces cerevisiae (strain ATCC 204508 / S288c) (Baker's yeast) protein is Ras modification protein ERF4 (SHR5).